The following is a 429-amino-acid chain: SET domain-containing protein 14 (429 aa).

Zn(2+)-binding residues include cysteine 26, cysteine 29, cysteine 39, cysteine 42, cysteine 48, cysteine 52, histidine 60, and cysteine 64. An MYND-type zinc finger spans residues 26 to 64; the sequence is CNQCLTSMAELKKCSACRRLAYCSQECQRADWKLHKVEC.

The protein localises to the nucleus. This is SET domain-containing protein 14 (set-14) from Caenorhabditis elegans.